We begin with the raw amino-acid sequence, 110 residues long: MASLAALLPLLALLVLCRLDPAQAFVNQHLCGSHLVEALYLVCGERGFFYTPKSRREVEELQVGQAELGGGPGAGGLQPSALELALQKRGIVEQCCTSICSLYQLENYCN.

An N-terminal signal peptide occupies residues 1-24 (MASLAALLPLLALLVLCRLDPAQA). 3 disulfides stabilise this stretch: Cys31–Cys96, Cys43–Cys109, and Cys95–Cys100. The propeptide at 57 to 87 (EVEELQVGQAELGGGPGAGGLQPSALELALQ) is c peptide.

It belongs to the insulin family. As to quaternary structure, heterodimer of a B chain and an A chain linked by two disulfide bonds.

It localises to the secreted. Insulin decreases blood glucose concentration. It increases cell permeability to monosaccharides, amino acids and fatty acids. It accelerates glycolysis, the pentose phosphate cycle, and glycogen synthesis in liver. In Oryctolagus cuniculus (Rabbit), this protein is Insulin (INS).